The primary structure comprises 317 residues: Ribose-phosphate pyrophosphokinase (317 aa).

ATP contacts are provided by residues 43 to 45 (DGE) and 102 to 103 (RQ). Lys106 and Arg110 together coordinate ADP. Residue His136 participates in Mg(2+) binding. ADP is bound by residues Gln141 and 149 to 150 (DH). Asp175 contacts Mg(2+). Lys198 is an active-site residue. D-ribose 5-phosphate contacts are provided by residues Arg200, Asp224, and 228-232 (DTAGT). 311–313 (SVS) lines the ADP pocket.

It belongs to the ribose-phosphate pyrophosphokinase family. Class I subfamily. As to quaternary structure, homohexamer; trimer of dimers. Mg(2+) serves as cofactor.

It localises to the cytoplasm. It catalyses the reaction D-ribose 5-phosphate + ATP = 5-phospho-alpha-D-ribose 1-diphosphate + AMP + H(+). It functions in the pathway metabolic intermediate biosynthesis; 5-phospho-alpha-D-ribose 1-diphosphate biosynthesis; 5-phospho-alpha-D-ribose 1-diphosphate from D-ribose 5-phosphate (route I): step 1/1. Its activity is regulated as follows. Activated by inorganic phosphate, and to a lesser extent by sulfate ions. In addition to form a complex with ATP, Mg(2+) also acts as a cofactor. Strongly inhibited by ADP through competitive binding at the activation site and at a specific allosteric site. Less strongly inhibited by alpha,beta-methylene ATP (mADP), AMP, GDP, GMP and UTP. Functionally, involved in the biosynthesis of the central metabolite phospho-alpha-D-ribosyl-1-pyrophosphate (PRPP) via the transfer of pyrophosphoryl group from ATP to 1-hydroxyl of ribose-5-phosphate (Rib-5-P). The protein is Ribose-phosphate pyrophosphokinase of Bacillus subtilis (strain 168).